A 62-amino-acid chain; its full sequence is Photosystem II reaction center protein Z (62 aa).

The next 2 helical transmembrane spans lie at 8 to 28 and 41 to 61; these read ALAA…VAYA and FLGS…NFLV.

It belongs to the PsbZ family. PSII is composed of 1 copy each of membrane proteins PsbA, PsbB, PsbC, PsbD, PsbE, PsbF, PsbH, PsbI, PsbJ, PsbK, PsbL, PsbM, PsbT, PsbX, PsbY, PsbZ, Psb30/Ycf12, peripheral proteins PsbO, CyanoQ (PsbQ), PsbU, PsbV and a large number of cofactors. It forms dimeric complexes.

It is found in the cellular thylakoid membrane. Functionally, may control the interaction of photosystem II (PSII) cores with the light-harvesting antenna, regulates electron flow through the 2 photosystem reaction centers. PSII is a light-driven water plastoquinone oxidoreductase, using light energy to abstract electrons from H(2)O, generating a proton gradient subsequently used for ATP formation. This is Photosystem II reaction center protein Z from Cyanothece sp. (strain PCC 7425 / ATCC 29141).